A 476-amino-acid chain; its full sequence is Small ribosomal subunit protein mS29 (476 aa).

The N-terminal 54 residues, methionine 1–tyrosine 54, are a transit peptide targeting the mitochondrion. The interval glycine 58 to threonine 97 is disordered. Polar residues-rich tracts occupy residues isoleucine 65–glutamine 74 and proline 86–threonine 97. Glycine 200–serine 207 provides a ligand contact to ATP.

Belongs to the mitochondrion-specific ribosomal protein mS29 family. As to quaternary structure, component of the mitochondrial small ribosomal subunit (mt-SSU). Mature yeast 74S mitochondrial ribosomes consist of a small (37S) and a large (54S) subunit. The 37S small subunit contains a 15S ribosomal RNA (15S mt-rRNA) and at least 32 different proteins. The 54S large subunit contains a 21S rRNA (21S mt-rRNA) and at least 45 different proteins.

The protein localises to the mitochondrion. Its function is as follows. Component of the mitochondrial ribosome (mitoribosome), a dedicated translation machinery responsible for the synthesis of mitochondrial genome-encoded proteins, including at least some of the essential transmembrane subunits of the mitochondrial respiratory chain. The mitoribosomes are attached to the mitochondrial inner membrane and translation products are cotranslationally integrated into the membrane. mS29 binds GTP and is probably an active GTPase. GTP hydrolysis may be linked to subunit association. mS29 also has an extraribosomal function, being required for maintenance of mitochondrial DNA. The polypeptide is Small ribosomal subunit protein mS29 (rsm23) (Schizosaccharomyces pombe (strain 972 / ATCC 24843) (Fission yeast)).